A 217-amino-acid polypeptide reads, in one-letter code: UPF0502 protein swp_3027 (217 aa).

This sequence belongs to the UPF0502 family.

The chain is UPF0502 protein swp_3027 from Shewanella piezotolerans (strain WP3 / JCM 13877).